The primary structure comprises 132 residues: uncharacterized protein (132 aa).

This is an uncharacterized protein from Caenorhabditis elegans.